Consider the following 476-residue polypeptide: Eukaryotic translation initiation factor 3 subunit L (476 aa).

The 196-residue stretch at Asp257–Leu452 folds into the PCI domain.

The protein belongs to the eIF-3 subunit L family. As to quaternary structure, component of the eukaryotic translation initiation factor 3 (eIF-3) complex.

It localises to the cytoplasm. Component of the eukaryotic translation initiation factor 3 (eIF-3) complex, which is involved in protein synthesis of a specialized repertoire of mRNAs and, together with other initiation factors, stimulates binding of mRNA and methionyl-tRNAi to the 40S ribosome. The eIF-3 complex specifically targets and initiates translation of a subset of mRNAs involved in cell proliferation. The chain is Eukaryotic translation initiation factor 3 subunit L from Aspergillus niger (strain ATCC MYA-4892 / CBS 513.88 / FGSC A1513).